A 403-amino-acid chain; its full sequence is S-adenosylmethionine synthase (403 aa).

141 to 146 (GQGSVD) contributes to the ATP binding site.

This sequence belongs to the AdoMet synthase 2 family. Requires Mg(2+) as cofactor.

It carries out the reaction L-methionine + ATP + H2O = S-adenosyl-L-methionine + phosphate + diphosphate. The protein operates within amino-acid biosynthesis; S-adenosyl-L-methionine biosynthesis; S-adenosyl-L-methionine from L-methionine: step 1/1. In terms of biological role, catalyzes the formation of S-adenosylmethionine from methionine and ATP. This is S-adenosylmethionine synthase from Methanococcus aeolicus (strain ATCC BAA-1280 / DSM 17508 / OCM 812 / Nankai-3).